The following is a 331-amino-acid chain: Pseudouridylate synthase TRUB2, mitochondrial (331 aa).

The transit peptide at 1 to 10 directs the protein to the mitochondrion; the sequence is MGSAGLSRLH. Catalysis depends on Asp-98, which acts as the Nucleophile. Residues 296-331 form a disordered region; it reads KSLSPGLDTKQLPSPGWSWDSQGPSSTLGLERGAGQ. The span at 314–323 shows a compositional bias: polar residues; it reads WDSQGPSSTL.

This sequence belongs to the pseudouridine synthase TruB family. In terms of assembly, forms a regulatory protein-RNA complex, consisting of RCC1L, NGRN, RPUSD3, RPUSD4, TRUB2, FASTKD2 and 16S mt-rRNA.

The protein resides in the mitochondrion matrix. The enzyme catalyses a uridine in mRNA = a pseudouridine in mRNA. It carries out the reaction uridine(55) in tRNA = pseudouridine(55) in tRNA. In terms of biological role, minor enzyme contributing to the isomerization of uridine to pseudouridine (pseudouridylation) of specific mitochondrial mRNAs (mt-mRNAs) such as COXI and COXIII mt-mRNAs. As a component of a functional protein-RNA module, consisting of RCC1L, NGRN, RPUSD3, RPUSD4, TRUB2, FASTKD2 and 16S mitochondrial ribosomal RNA (16S mt-rRNA), controls 16S mt-rRNA abundance and is required for intra-mitochondrial translation. Also catalyzes pseudouridylation of some tRNAs, including synthesis of pseudouridine(55) from uracil-55, in the psi GC loop of a subset of tRNAs. This is Pseudouridylate synthase TRUB2, mitochondrial from Homo sapiens (Human).